A 273-amino-acid polypeptide reads, in one-letter code: Nitrogenase iron protein (273 aa).

Position 8–15 (8–15 (GKGGIGKS)) interacts with ATP. Cysteine 95 contacts [4Fe-4S] cluster. Arginine 98 is modified (ADP-ribosylarginine; by dinitrogenase reductase ADP-ribosyltransferase). Cysteine 130 serves as a coordination point for [4Fe-4S] cluster.

The protein belongs to the NifH/BchL/ChlL family. Homodimer. The cofactor is [4Fe-4S] cluster. In terms of processing, the reversible ADP-ribosylation of Arg-98 inactivates the nitrogenase reductase and regulates nitrogenase activity.

It carries out the reaction N2 + 8 reduced [2Fe-2S]-[ferredoxin] + 16 ATP + 16 H2O = H2 + 8 oxidized [2Fe-2S]-[ferredoxin] + 2 NH4(+) + 16 ADP + 16 phosphate + 6 H(+). The key enzymatic reactions in nitrogen fixation are catalyzed by the nitrogenase complex, which has 2 components: the iron protein and the molybdenum-iron protein. The chain is Nitrogenase iron protein from Roseiflexus castenholzii (strain DSM 13941 / HLO8).